A 230-amino-acid polypeptide reads, in one-letter code: 6-carboxyhexanoate--CoA ligase (230 aa).

The protein belongs to the BioW family. Homodimer. The cofactor is Mg(2+).

It carries out the reaction heptanedioate + ATP + CoA = 6-carboxyhexanoyl-CoA + AMP + diphosphate. The protein operates within metabolic intermediate metabolism; pimeloyl-CoA biosynthesis; pimeloyl-CoA from pimelate: step 1/1. Its function is as follows. Catalyzes the transformation of pimelate into pimeloyl-CoA with concomitant hydrolysis of ATP to AMP. This Staphylococcus aureus (strain Mu3 / ATCC 700698) protein is 6-carboxyhexanoate--CoA ligase.